The primary structure comprises 876 residues: Radial spoke head 10 homolog B (876 aa).

Residues 1–16 show a composition bias toward basic and acidic residues; the sequence is MVKEKKKADKKGDKSA. The tract at residues 1–71 is disordered; the sequence is MVKEKKKADK…VQMEQSEEET (71 aa). Residues 17 to 37 are compositionally biased toward polar residues; it reads RSPSSISDNPEASKQDSNASK. Low complexity predominate over residues 39-50; sequence EVAPSAVVPVVE. MORN repeat units lie at residues 86–108, 109–129, 132–154, 155–172, 179–196, 204–225, 227–244, 251–268, 284–305, and 307–328; these read YEGEKVRGLYEGEGFAVFQGGNT, YHGMFSEGLMHGQGTYIWADG, YEGDFVKNIPMNHGVYTWPDGST, YEGEVTNGMRNGFGMFKC, YIGHWCHGKRHGKGSIYY, YEGDWVYNIKKGWGIRCYKSGN, YEGQWENNMRHGEGRMRW, YTGHWEKGIQNGFGTHTW, YIGEFVNGFRHGQGKFYYASGA, and YEGEWASNKKQGRGRMTFKNGH. Polar residues predominate over residues 356–372; that stretch reads WSDASQRSRQPRGSSVS. The interval 356–386 is disordered; it reads WSDASQRSRQPRGSSVSAVREPETLRKLDGS. The span at 375-386 shows a compositional bias: basic and acidic residues; sequence REPETLRKLDGS. A coiled-coil region spans residues 790 to 832; the sequence is LKEKVKENQLQEAELAQQRQIENEELEARLNILREEEARKQDF. Residues 839-876 form a disordered region; the sequence is LKEPSEIPASQPLTPSPPKEDLASIQTSKASPGKKKKK.

In terms of assembly, interacts with RSPH6A. Does not appear to be part of the axonemal radial spoke complexes 1 or 2. In terms of tissue distribution, expressed in ependymal cells (at protein level).

The protein resides in the cytoplasm. The protein localises to the cytoskeleton. It is found in the cilium axoneme. Its subcellular location is the cell projection. It localises to the cilium. The protein resides in the flagellum. May function as part of the axonemal radial spoke complex 3 (RS3). Radial spoke complexes are important for ciliary motility. In Mus musculus (Mouse), this protein is Radial spoke head 10 homolog B.